Here is a 213-residue protein sequence, read N- to C-terminus: Transcription antitermination protein NusB (213 aa).

The protein belongs to the NusB family.

Involved in transcription antitermination. Required for transcription of ribosomal RNA (rRNA) genes. Binds specifically to the boxA antiterminator sequence of the ribosomal RNA (rrn) operons. This Synechococcus elongatus (strain ATCC 33912 / PCC 7942 / FACHB-805) (Anacystis nidulans R2) protein is Transcription antitermination protein NusB.